The sequence spans 232 residues: Large ribosomal subunit protein uL1 (232 aa).

The protein belongs to the universal ribosomal protein uL1 family. As to quaternary structure, part of the 50S ribosomal subunit.

In terms of biological role, binds directly to 23S rRNA. The L1 stalk is quite mobile in the ribosome, and is involved in E site tRNA release. Functionally, protein L1 is also a translational repressor protein, it controls the translation of the L11 operon by binding to its mRNA. The sequence is that of Large ribosomal subunit protein uL1 from Aromatoleum aromaticum (strain DSM 19018 / LMG 30748 / EbN1) (Azoarcus sp. (strain EbN1)).